Reading from the N-terminus, the 231-residue chain is Aquaporin Z (231 aa).

Helical transmembrane passes span cysteine 9–phenylalanine 29 and isoleucine 34–valine 54. The short motif at asparagine 63–alanine 65 is the NPA 1 element. 3 helical membrane passes run valine 82 to isoleucine 102, tyrosine 129 to isoleucine 149, and phenylalanine 156 to isoleucine 176. Residues asparagine 186–alanine 188 carry the NPA 2 motif. Residues leucine 202–isoleucine 222 traverse the membrane as a helical segment.

This sequence belongs to the MIP/aquaporin (TC 1.A.8) family. Homotetramer.

It is found in the cell inner membrane. It carries out the reaction H2O(in) = H2O(out). Its function is as follows. Channel that permits osmotically driven movement of water in both directions. It is involved in the osmoregulation and in the maintenance of cell turgor during volume expansion in rapidly growing cells. It mediates rapid entry or exit of water in response to abrupt changes in osmolarity. The sequence is that of Aquaporin Z from Escherichia coli O6:H1 (strain CFT073 / ATCC 700928 / UPEC).